Consider the following 292-residue polypeptide: Large ribosomal subunit protein bL19m (292 aa).

Positions 39 to 68 (GPGRRQITGPSEPGVFQPPPKPVIVDKRGP) are disordered. A Phosphoserine modification is found at serine 77.

Belongs to the bacterial ribosomal protein bL19 family. In terms of assembly, component of the mitochondrial ribosome large subunit (39S) which comprises a 16S rRNA and about 50 distinct proteins.

The protein resides in the mitochondrion. The sequence is that of Large ribosomal subunit protein bL19m (MRPL19) from Bos taurus (Bovine).